The sequence spans 1419 residues: Collagen alpha-1(II) chain (1419 aa).

The first 25 residues, 1-25 (MIRLGAPQSLVLLTLLIATVLQCQG), serve as a signal peptide directing secretion. Positions 26 to 113 (QDARKLGPKG…PGLGGGNFAA (88 aa)) are cleaved as a propeptide — N-terminal propeptide. The tract at residues 28-1168 (ARKLGPKGQK…GQREKGPDPL (1141 aa)) is disordered. 2 stretches are compositionally biased toward basic and acidic residues: residues 36 to 47 (QKGEPGDIKDII) and 64 to 85 (PRGD…RDGE). The segment covering 89–104 (PGNPGPPGPPGPPGPP) has biased composition (pro residues). A 5-hydroxylysine modification is found at K122. O-linked (Gal...) hydroxylysine glycosylation is present at K122. Over residues 124-135 (GGAQMGVMQGPM) the composition is skewed to low complexity. The interval 133–1146 (GPMGPMGPRG…PGPPGPPGPP (1014 aa)) is triple-helical region. Pro residues predominate over residues 140–149 (PRGPPGPAGA). Positions 150–171 (PGPQGFQGNPGEPGEPGVSGPI) are enriched in low complexity. A compositionally biased stretch (basic and acidic residues) spans 183–197 (PGDDGEAGKPGKAGE). 5-hydroxylysine occurs at positions 219, 231, and 240. O-linked (Gal...) hydroxylysine glycosylation is found at K219, K231, and K240. Composition is skewed to low complexity over residues 242-252 (ESGSPGENGSP) and 267-282 (TGPA…DGQP). Gly residues predominate over residues 292-301 (GPAGGPGFLG). K306 is modified (5-hydroxylysine). O-linked (Gal...) hydroxylysine glycosylation is present at K306. Over residues 335-363 (PAGASGNPGTDGIPGAKGSAGAPGIAGAP) the composition is skewed to low complexity. A compositionally biased stretch (pro residues) spans 365 to 374 (FPGPRGPPGP). A compositionally biased stretch (low complexity) spans 404-417 (ETGPAGPQGAPGPA). Residues K540 and K552 each carry the 5-hydroxylysine modification. K540 and K552 each carry an O-linked (Gal...) hydroxylysine glycan. A compositionally biased stretch (low complexity) spans 554-563 (LAGAPGLRGL). A 4-hydroxyproline mark is found at P591 and P600. P602 is modified (3-hydroxyproline; partial). A 4-hydroxyproline mark is found at P603 and P606. Over residues 638–668 (ERGSPGAQGLQGPRGLPGTPGTDGPKGAAGP) the composition is skewed to low complexity. Positions 696-707 (KGDRGDVGEKGP) are enriched in basic and acidic residues. Low complexity-rich tracts occupy residues 765–780 (AGFA…PGAK) and 809–846 (PTGV…NGNP). P839 bears the 3-hydroxyproline; partial mark. 4-hydroxyproline is present on residues P840, P846, and P852. Residues 1001–1011 (APGPPGSPGPA) are compositionally biased toward pro residues. The span at 1047 to 1061 (RGDKGEAGEPGERGL) shows a compositional bias: basic and acidic residues. P1076 carries the post-translational modification 3-hydroxyproline; partial. 2 stretches are compositionally biased toward low complexity: residues 1080-1089 (SGDQGTSGPA) and 1103-1113 (PSGKDGSNGIP). At P1113 the chain carries 4-hydroxyproline. At P1118 the chain carries 3-hydroxyproline. P1119 is subject to 4-hydroxyproline. Positions 1131–1148 (AGPPGNPGPPGPPGPPGP) are enriched in pro residues. At P1133 the chain carries 3-hydroxyproline; partial. A 4-hydroxyproline mark is found at P1134 and P1137. 3-hydroxyproline; partial is present on P1139. 4-hydroxyproline occurs at positions 1140 and 1143. P1145 carries the post-translational modification 3-hydroxyproline; partial. P1146 is subject to 4-hydroxyproline. The tract at residues 1147–1173 (GPGIDMSAFAGLGQREKGPDPLQYMRA) is nonhelical region (C-terminal). Residues 1185–1419 (VEVDATLKSL…GVDIGPVCFL (235 aa)) form the Fibrillar collagen NC1 domain. 3 cysteine pairs are disulfide-bonded: C1215–C1247, C1255–C1417, and C1325–C1370. D1233, N1235, Q1236, C1238, and D1241 together coordinate Ca(2+). N1320 carries N-linked (GlcNAc...) asparagine glycosylation.

Belongs to the fibrillar collagen family. Homotrimers of alpha 1(II) chains. Contains mostly 4-hydroxyproline. Prolines at the third position of the tripeptide repeating unit (G-X-P) are 4-hydroxylated in some or all of the chains. In terms of processing, contains 3-hydroxyproline at a few sites. This modification occurs on the first proline residue in the sequence motif Gly-Pro-Hyp, where Hyp is 4-hydroxyproline. Post-translationally, lysine residues at the third position of the tripeptide repeating unit (G-X-Y) are 5-hydroxylated in some or all of the chains. O-glycosylated on hydroxylated lysine residues. The O-linked glycan consists of a Glc-Gal disaccharide. As to expression, expressed in chondrocytes.

It is found in the secreted. Its subcellular location is the extracellular space. The protein resides in the extracellular matrix. Its function is as follows. Type II collagen is specific for cartilaginous tissues. It is essential for the normal embryonic development of the skeleton, for linear growth and for the ability of cartilage to resist compressive forces. This chain is Collagen alpha-1(II) chain, found in Rattus norvegicus (Rat).